We begin with the raw amino-acid sequence, 298 residues long: Apolipoprotein E (298 aa).

Residues 1–18 (MKILWAALVLTLLAGCRA) form the signal peptide. 6 consecutive repeat copies span residues 74–95 (LLME…KEVG), 96–117 (PMAE…ARLA), 118–139 (GDME…AMLG), 140–161 (QSSE…KRLQ), 162–183 (RDAE…EGAE), and 223–244 (GRLE…EQME). The 8 X 22 AA approximate tandem repeats stretch occupies residues 74 to 244 (LLMEDTMKEL…RLEEVREQME (171 aa)). A Methionine sulfoxide modification is found at Met-137. Position 141 is a phosphoserine (Ser-141). The interval 152–162 (HLRKLRKRLQR) is LDL and other lipoprotein receptors binding. 156–159 (LRKR) contacts heparin. Residues 204-272 (ALTSHPLRER…SWFEPMVEDL (69 aa)) form a lipid-binding and lipoprotein association region. A heparin-binding site is contributed by 218–225 (GEQVRGRL). The specificity for association with VLDL stretch occupies residues 260 to 272 (RLKSWFEPMVEDL).

The protein belongs to the apolipoprotein A1/A4/E family. Homotetramer. May interact with ABCA1; functionally associated with ABCA1 in the biogenesis of HDLs. May interact with APP/A4 amyloid-beta peptide; the interaction is extremely stable in vitro but its physiological significance is unclear. May interact with MAPT. May interact with MAP2. In the cerebrospinal fluid, interacts with secreted SORL1. Interacts with PMEL; this allows the loading of PMEL luminal fragment on ILVs to induce fibril nucleation. In terms of processing, APOE exists as multiple glycosylated and sialylated glycoforms within cells and in plasma. The extent of glycosylation and sialylation are tissue and context specific. Glycated in plasma VLDL. Post-translationally, phosphorylated by FAM20C in the extracellular medium.

The protein resides in the secreted. Its subcellular location is the extracellular space. The protein localises to the extracellular matrix. It localises to the extracellular vesicle. It is found in the endosome. The protein resides in the multivesicular body. Its function is as follows. APOE is an apolipoprotein, a protein associating with lipid particles, that mainly functions in lipoprotein-mediated lipid transport between organs via the plasma and interstitial fluids. APOE is a core component of plasma lipoproteins and is involved in their production, conversion and clearance. Apolipoproteins are amphipathic molecules that interact both with lipids of the lipoprotein particle core and the aqueous environment of the plasma. As such, APOE associates with chylomicrons, chylomicron remnants, very low density lipoproteins (VLDL) and intermediate density lipoproteins (IDL) but shows a preferential binding to high-density lipoproteins (HDL). It also binds a wide range of cellular receptors including the LDL receptor/LDLR, the LDL receptor-related proteins LRP1, LRP2 and LRP8 and the very low-density lipoprotein receptor/VLDLR that mediate the cellular uptake of the APOE-containing lipoprotein particles. Finally, APOE also has a heparin-binding activity and binds heparan-sulfate proteoglycans on the surface of cells, a property that supports the capture and the receptor-mediated uptake of APOE-containing lipoproteins by cells. A main function of APOE is to mediate lipoprotein clearance through the uptake of chylomicrons, VLDLs, and HDLs by hepatocytes. APOE is also involved in the biosynthesis by the liver of VLDLs as well as their uptake by peripheral tissues ensuring the delivery of triglycerides and energy storage in muscle, heart and adipose tissues. By participating in the lipoprotein-mediated distribution of lipids among tissues, APOE plays a critical role in plasma and tissues lipid homeostasis. APOE is also involved in two steps of reverse cholesterol transport, the HDLs-mediated transport of cholesterol from peripheral tissues to the liver, and thereby plays an important role in cholesterol homeostasis. First, it is functionally associated with ABCA1 in the biogenesis of HDLs in tissues. Second, it is enriched in circulating HDLs and mediates their uptake by hepatocytes. APOE also plays an important role in lipid transport in the central nervous system, regulating neuron survival and sprouting. This is Apolipoprotein E (APOE) from Hydrochoerus hydrochaeris (Capybara).